Here is a 379-residue protein sequence, read N- to C-terminus: Dual-specificity RNA methyltransferase RlmN (379 aa).

Glu95 functions as the Proton acceptor in the catalytic mechanism. Residues 101–345 (EETRGTLCVS…TTVRKTRGDD (245 aa)) form the Radical SAM core domain. Residues Cys108 and Cys350 are joined by a disulfide bond. Cys115, Cys119, and Cys122 together coordinate [4Fe-4S] cluster. Residues 176-177 (GE), Ser208, 230-232 (SLH), and Asn307 contribute to the S-adenosyl-L-methionine site. Cys350 (S-methylcysteine intermediate) is an active-site residue.

It belongs to the radical SAM superfamily. RlmN family. [4Fe-4S] cluster serves as cofactor.

Its subcellular location is the cytoplasm. The enzyme catalyses adenosine(2503) in 23S rRNA + 2 reduced [2Fe-2S]-[ferredoxin] + 2 S-adenosyl-L-methionine = 2-methyladenosine(2503) in 23S rRNA + 5'-deoxyadenosine + L-methionine + 2 oxidized [2Fe-2S]-[ferredoxin] + S-adenosyl-L-homocysteine. The catalysed reaction is adenosine(37) in tRNA + 2 reduced [2Fe-2S]-[ferredoxin] + 2 S-adenosyl-L-methionine = 2-methyladenosine(37) in tRNA + 5'-deoxyadenosine + L-methionine + 2 oxidized [2Fe-2S]-[ferredoxin] + S-adenosyl-L-homocysteine. Specifically methylates position 2 of adenine 2503 in 23S rRNA and position 2 of adenine 37 in tRNAs. m2A2503 modification seems to play a crucial role in the proofreading step occurring at the peptidyl transferase center and thus would serve to optimize ribosomal fidelity. This Burkholderia vietnamiensis (strain G4 / LMG 22486) (Burkholderia cepacia (strain R1808)) protein is Dual-specificity RNA methyltransferase RlmN.